The sequence spans 264 residues: Teichoic acids export ATP-binding protein TagH (264 aa).

In terms of domain architecture, ABC transporter spans 24 to 243; that stretch reads IKDALIPKNK…YEQFLKDFKK (220 aa). Position 57–64 (57–64) interacts with ATP; sequence GINGSGKS.

It belongs to the ABC transporter superfamily. Teichoic acids exporter (TC 3.A.1.104.1) family. The complex is composed of two ATP-binding proteins (TagH) and two transmembrane proteins (TagG).

It localises to the cell membrane. The enzyme catalyses ATP + H2O + teichoic acidSide 1 = ADP + phosphate + teichoic acidSide 2.. Its function is as follows. Part of the ABC transporter complex TagGH involved in teichoic acids export. Responsible for energy coupling to the transport system. The polypeptide is Teichoic acids export ATP-binding protein TagH (Staphylococcus haemolyticus (strain JCSC1435)).